The primary structure comprises 273 residues: Mitochondrial distribution and morphology protein 12 (273 aa).

Positions 1–260 constitute an SMP-LTD domain; sequence MSFDINWEQL…WPSWINFDFY (260 aa). The disordered stretch occupies residues 76 to 98; sequence MSAEEETEGSDDEGYGGDRVRNR. The segment covering 78 to 90 has biased composition (acidic residues); sequence AEEETEGSDDEGY.

Belongs to the MDM12 family. As to quaternary structure, component of the ER-mitochondria encounter structure (ERMES) or MDM complex, composed of MMM1, MDM10, MDM12 and MDM34. An MMM1 homodimer associates with one molecule of MDM12 on each side in a pairwise head-to-tail manner, and the SMP-LTD domains of MMM1 and MDM12 generate a continuous hydrophobic tunnel for phospholipid trafficking.

Its subcellular location is the mitochondrion outer membrane. It localises to the endoplasmic reticulum membrane. Functionally, component of the ERMES/MDM complex, which serves as a molecular tether to connect the endoplasmic reticulum (ER) and mitochondria. Components of this complex are involved in the control of mitochondrial shape and protein biogenesis, and function in nonvesicular lipid trafficking between the ER and mitochondria. MDM12 is required for the interaction of the ER-resident membrane protein MMM1 and the outer mitochondrial membrane-resident beta-barrel protein MDM10. The MDM12-MMM1 subcomplex functions in the major beta-barrel assembly pathway that is responsible for biogenesis of all mitochondrial outer membrane beta-barrel proteins, and acts in a late step after the SAM complex. The MDM10-MDM12-MMM1 subcomplex further acts in the TOM40-specific pathway after the action of the MDM12-MMM1 complex. Essential for establishing and maintaining the structure of mitochondria and maintenance of mtDNA nucleoids. The sequence is that of Mitochondrial distribution and morphology protein 12 from Vanderwaltozyma polyspora (strain ATCC 22028 / DSM 70294 / BCRC 21397 / CBS 2163 / NBRC 10782 / NRRL Y-8283 / UCD 57-17) (Kluyveromyces polysporus).